The sequence spans 218 residues: Dual specificity protein phosphatase TpbA (218 aa).

An N-terminal signal peptide occupies residues 1–28; the sequence is MHRSPLAWLRLLLAAVLGAFLLGGPLHA. The Tyrosine-protein phosphatase domain occupies 44–188; sequence DPSINLYRMS…YVRGADVDGL (145 aa). The active-site Proton donor/acceptor is the aspartate 105. Cysteine 132 functions as the Phosphocysteine intermediate in the catalytic mechanism.

The protein belongs to the protein-tyrosine phosphatase family.

It is found in the periplasm. It carries out the reaction O-phospho-L-tyrosyl-[protein] + H2O = L-tyrosyl-[protein] + phosphate. The enzyme catalyses O-phospho-L-threonyl-[protein] + H2O = L-threonyl-[protein] + phosphate. It catalyses the reaction O-phospho-L-seryl-[protein] + H2O = L-seryl-[protein] + phosphate. In terms of biological role, phosphatase that regulates diverse phenotypes in P.aeruginosa via regulation of the concentration of cellular c-di-GMP. Acts by dephosphorylating the membrane-anchored diguanylate cyclase TpbB at tyrosine and serine/threonine sites, leading to inactivation of TpbB and reduced c-di-GMP production. In vitro shows phosphatase activity toward p-nitrophenyl phosphate (pNPP) and tyrosine phosphopeptides. Can efficiently dephosphorylate two phosphorylated peptides derived from the periplasmic domain of TpbB, with a strong preference for Tyr-48 over Tyr-62. The sequence is that of Dual specificity protein phosphatase TpbA from Pseudomonas aeruginosa (strain ATCC 15692 / DSM 22644 / CIP 104116 / JCM 14847 / LMG 12228 / 1C / PRS 101 / PAO1).